A 469-amino-acid chain; its full sequence is UDP-N-acetylmuramate--L-alanine ligase (469 aa).

Gly123–Thr129 provides a ligand contact to ATP.

The protein belongs to the MurCDEF family.

It localises to the cytoplasm. It carries out the reaction UDP-N-acetyl-alpha-D-muramate + L-alanine + ATP = UDP-N-acetyl-alpha-D-muramoyl-L-alanine + ADP + phosphate + H(+). It functions in the pathway cell wall biogenesis; peptidoglycan biosynthesis. Functionally, cell wall formation. In Synechococcus sp. (strain CC9605), this protein is UDP-N-acetylmuramate--L-alanine ligase.